The sequence spans 165 residues: Phosphopantetheine adenylyltransferase (165 aa).

Thr9 is a substrate binding site. Residues 9 to 10 (TF) and His17 each bind ATP. Residues Lys41, Leu78, and Arg92 each coordinate substrate. Residues 93–95 (GLR), Glu103, and 128–134 (HQAIASK) each bind ATP.

Belongs to the bacterial CoaD family. In terms of assembly, homohexamer. Requires Mg(2+) as cofactor.

The protein localises to the cytoplasm. It carries out the reaction (R)-4'-phosphopantetheine + ATP + H(+) = 3'-dephospho-CoA + diphosphate. The protein operates within cofactor biosynthesis; coenzyme A biosynthesis; CoA from (R)-pantothenate: step 4/5. In terms of biological role, reversibly transfers an adenylyl group from ATP to 4'-phosphopantetheine, yielding dephospho-CoA (dPCoA) and pyrophosphate. The protein is Phosphopantetheine adenylyltransferase of Ruegeria sp. (strain TM1040) (Silicibacter sp.).